A 32-amino-acid polypeptide reads, in one-letter code: Natriuretic peptide Coa_NP1 (32 aa).

An intrachain disulfide couples cysteine 8 to cysteine 24.

This sequence belongs to the natriuretic peptide family. Snake NP subfamily. In terms of tissue distribution, expressed by the venom gland.

Its subcellular location is the secreted. Snake venom natriuretic peptide that exhibits hypotensive and vasodepressor activity in rats. In Crotalus lutosus abyssus (Grand Canyon rattlesnake), this protein is Natriuretic peptide Coa_NP1.